We begin with the raw amino-acid sequence, 394 residues long: Putative F-box protein At5g66830 (394 aa).

The 47-residue stretch at 17–63 (DWCWSKLPSDLMQFVFDRLGFADFQRAKSVCSSWLSVSRNSQPNNQI) folds into the F-box domain.

The chain is Putative F-box protein At5g66830 from Arabidopsis thaliana (Mouse-ear cress).